The chain runs to 171 residues: Probable deoxyuridine 5'-triphosphate nucleotidohydrolase (171 aa).

The protein belongs to the dCTP deaminase family. Archaeal dUTPase subfamily.

The catalysed reaction is dUTP + H2O = dUMP + diphosphate + H(+). It functions in the pathway pyrimidine metabolism; dUMP biosynthesis; dUMP from dCTP (dUTP route): step 2/2. Its function is as follows. This enzyme is involved in nucleotide metabolism: it produces dUMP, the immediate precursor of thymidine nucleotides and it decreases the intracellular concentration of dUTP so that uracil cannot be incorporated into DNA. The sequence is that of Probable deoxyuridine 5'-triphosphate nucleotidohydrolase from Methanosarcina mazei (strain ATCC BAA-159 / DSM 3647 / Goe1 / Go1 / JCM 11833 / OCM 88) (Methanosarcina frisia).